The chain runs to 216 residues: Probable transaldolase (216 aa).

Residue lysine 83 is the Schiff-base intermediate with substrate of the active site.

This sequence belongs to the transaldolase family. Type 3B subfamily.

Its subcellular location is the cytoplasm. It catalyses the reaction D-sedoheptulose 7-phosphate + D-glyceraldehyde 3-phosphate = D-erythrose 4-phosphate + beta-D-fructose 6-phosphate. The protein operates within carbohydrate degradation; pentose phosphate pathway; D-glyceraldehyde 3-phosphate and beta-D-fructose 6-phosphate from D-ribose 5-phosphate and D-xylulose 5-phosphate (non-oxidative stage): step 2/3. Transaldolase is important for the balance of metabolites in the pentose-phosphate pathway. This chain is Probable transaldolase, found in Shouchella clausii (strain KSM-K16) (Alkalihalobacillus clausii).